Consider the following 61-residue polypeptide: Large ribosomal subunit protein uL30 (61 aa).

The protein belongs to the universal ribosomal protein uL30 family. Part of the 50S ribosomal subunit.

This Clostridioides difficile (strain 630) (Peptoclostridium difficile) protein is Large ribosomal subunit protein uL30.